The following is a 174-amino-acid chain: Small ribosomal subunit protein uS5 (174 aa).

The S5 DRBM domain maps to 19–82; that stretch reads LREKMVAINR…DEARRKMVKV (64 aa).

It belongs to the universal ribosomal protein uS5 family. As to quaternary structure, part of the 30S ribosomal subunit. Contacts proteins S4 and S8.

With S4 and S12 plays an important role in translational accuracy. In terms of biological role, located at the back of the 30S subunit body where it stabilizes the conformation of the head with respect to the body. The chain is Small ribosomal subunit protein uS5 from Azoarcus sp. (strain BH72).